The primary structure comprises 150 residues: MDTLDEEQLSALKKAFDSFDTDSKGFITPETVGVILRMMGVKISEKNLQQVIAETDEDGSGELEFEEFVELAAKFLIEEDEEALKAELKEAFRIYDKGGDGYITTDVLREILRELDNRLTEDDLDGIIEEVDEDGSGTLDFDEFMEMMSG.

An N-acetylmethionine modification is found at M1. EF-hand domains lie at 7–42, 43–78, 83–118, and 119–150; these read EQLSALKKAFDSFDTDSKGFITPETVGVILRMMGVK, ISEKNLQQVIAETDEDGSGELEFEEFVELAAKFLIE, ALKAELKEAFRIYDKGGDGYITTDVLREILRELDNR, and LTEDDLDGIIEEVDEDGSGTLDFDEFMEMMSG. 5 residues coordinate Ca(2+): D56, D58, S60, E62, and E67. Ca(2+) is bound by residues D132, D134, S136, T138, and E143.

It belongs to the troponin C family.

Troponin is the central regulatory protein of striated muscle contraction. Tn consists of three components: Tn-I which is the inhibitor of actomyosin ATPase, Tn-T which contains the binding site for tropomyosin and Tn-C. The binding of calcium to Tn-C abolishes the inhibitory action of Tn on actin filaments. The chain is Troponin C, isotype gamma from Astacus leptodactylus (Turkish narrow-clawed crayfish).